The primary structure comprises 478 residues: Crt homolog 3 (478 aa).

A disordered region spans residues 1–30 (MGSDERKPLLSINDGDDDFNHQDVSTKTPP). Over 1-52 (MGSDERKPLLSINDGDDDFNHQDVSTKTPPIKKESLSNKFKSFLKKSMTKET) the chain is Cytoplasmic. The chain crosses the membrane as a helical span at residues 53–73 (LPILIYVLLYIISGVINVVLL). Over 74-83 (KKLMIKFVNY) the chain is Vacuolar. Residues 84 to 104 (GFFLSQITNYGYLPIFLVAMW) form a helical membrane-spanning segment. At 105–124 (YKMYCTSDVPKETRNFPQYK) the chain is on the cytoplasmic side. A helical transmembrane segment spans residues 125–145 (FVIMGLLDAINGFFVVIGGVS). The Vacuolar portion of the chain corresponds to 146 to 149 (TSGP). A helical membrane pass occupies residues 150-170 (LQQLLNQAIIPFTMIASFIFL). Residues 171 to 178 (RERYSLFQ) lie on the Cytoplasmic side of the membrane. A helical transmembrane segment spans residues 179–199 (LGGAAVILGGVIVSLIPSLVG). Residues 200 to 205 (GSSGGN) are Vacuolar-facing. A helical membrane pass occupies residues 206–226 (ILFYNFFYLISVIPGALSNVY). Over 227 to 237 (KDIAFQSIDMD) the chain is Cytoplasmic. Residues 238–258 (VWYLQFWDCLYQSLFGSILFP) form a helical membrane-spanning segment. The Vacuolar segment spans residues 259-322 (VNNWLPPPAT…FVCDDCHNTW (64 aa)). The N-linked (GlcNAc...) asparagine glycan is linked to asparagine 296. Residues 323–343 (IIVLIYMTVNIAYNIFILLVL) traverse the membrane as a helical segment. Residues 344–352 (KHAGATVYS) lie on the Cytoplasmic side of the membrane. A helical membrane pass occupies residues 353–373 (IANTVILPLTNIFFSIHFIMG). Residues 374–376 (AAT) lie on the Vacuolar side of the membrane. A helical transmembrane segment spans residues 377 to 397 (TPFSALSVAGLLLILFGLGGY). Topologically, residues 398-478 (RIGSMIKKPP…RYRATNIINN (81 aa)) are cytoplasmic. Positions 404–446 (KKPPPDSKKDSEQQGGEGGAGDGDSSDNKNNLGDSAEIPQQIQ) are disordered. Positions 406–415 (PPPDSKKDSE) are enriched in basic and acidic residues.

This sequence belongs to the CRT-like transporter family.

It is found in the vacuole membrane. Its function is as follows. Nutrient transporter. Involved in maintaining the osmotic homeostasis of the digestive vacuole. This chain is Crt homolog 3 (crtp3), found in Dictyostelium discoideum (Social amoeba).